The chain runs to 209 residues: Imidazole glycerol phosphate synthase subunit HisH (209 aa).

Positions 1-205 constitute a Glutamine amidotransferase type-1 domain; the sequence is MIAIIDYGMG…KGVVEAWKSS (205 aa). Catalysis depends on Cys79, which acts as the Nucleophile. Catalysis depends on residues His180 and Glu182.

As to quaternary structure, heterodimer of HisH and HisF.

The protein localises to the cytoplasm. It carries out the reaction 5-[(5-phospho-1-deoxy-D-ribulos-1-ylimino)methylamino]-1-(5-phospho-beta-D-ribosyl)imidazole-4-carboxamide + L-glutamine = D-erythro-1-(imidazol-4-yl)glycerol 3-phosphate + 5-amino-1-(5-phospho-beta-D-ribosyl)imidazole-4-carboxamide + L-glutamate + H(+). The catalysed reaction is L-glutamine + H2O = L-glutamate + NH4(+). Its pathway is amino-acid biosynthesis; L-histidine biosynthesis; L-histidine from 5-phospho-alpha-D-ribose 1-diphosphate: step 5/9. Its function is as follows. IGPS catalyzes the conversion of PRFAR and glutamine to IGP, AICAR and glutamate. The HisH subunit catalyzes the hydrolysis of glutamine to glutamate and ammonia as part of the synthesis of IGP and AICAR. The resulting ammonia molecule is channeled to the active site of HisF. This Bacillus mycoides (strain KBAB4) (Bacillus weihenstephanensis) protein is Imidazole glycerol phosphate synthase subunit HisH.